The following is a 345-amino-acid chain: Matrix protein (345 aa).

The interval 148-185 (KKKSKAKSAEGPSASTEDIKDSDTKGNQDIGDNGDLNS) is disordered. The span at 164–173 (EDIKDSDTKG) shows a compositional bias: basic and acidic residues.

Its subcellular location is the virion. In Aphis (Hairy beggarticks), this protein is Matrix protein (M2).